Consider the following 280-residue polypeptide: Bifunctional protein FolD (280 aa).

NADP(+)-binding positions include 166-168 and Ser191; that span reads GRS.

Belongs to the tetrahydrofolate dehydrogenase/cyclohydrolase family. In terms of assembly, homodimer.

The catalysed reaction is (6R)-5,10-methylene-5,6,7,8-tetrahydrofolate + NADP(+) = (6R)-5,10-methenyltetrahydrofolate + NADPH. The enzyme catalyses (6R)-5,10-methenyltetrahydrofolate + H2O = (6R)-10-formyltetrahydrofolate + H(+). The protein operates within one-carbon metabolism; tetrahydrofolate interconversion. Its function is as follows. Catalyzes the oxidation of 5,10-methylenetetrahydrofolate to 5,10-methenyltetrahydrofolate and then the hydrolysis of 5,10-methenyltetrahydrofolate to 10-formyltetrahydrofolate. In Saccharophagus degradans (strain 2-40 / ATCC 43961 / DSM 17024), this protein is Bifunctional protein FolD.